The primary structure comprises 154 residues: D-aminoacyl-tRNA deacylase (154 aa).

The Gly-cisPro motif, important for rejection of L-amino acids signature appears at 142 to 143 (GP).

The protein belongs to the DTD family. As to quaternary structure, homodimer.

Its subcellular location is the cytoplasm. It catalyses the reaction glycyl-tRNA(Ala) + H2O = tRNA(Ala) + glycine + H(+). It carries out the reaction a D-aminoacyl-tRNA + H2O = a tRNA + a D-alpha-amino acid + H(+). Its function is as follows. An aminoacyl-tRNA editing enzyme that deacylates mischarged D-aminoacyl-tRNAs. Also deacylates mischarged glycyl-tRNA(Ala), protecting cells against glycine mischarging by AlaRS. Acts via tRNA-based rather than protein-based catalysis; rejects L-amino acids rather than detecting D-amino acids in the active site. By recycling D-aminoacyl-tRNA to D-amino acids and free tRNA molecules, this enzyme counteracts the toxicity associated with the formation of D-aminoacyl-tRNA entities in vivo and helps enforce protein L-homochirality. The polypeptide is D-aminoacyl-tRNA deacylase (Polaromonas naphthalenivorans (strain CJ2)).